The sequence spans 391 residues: Chaperone protein DnaJ (391 aa).

The J domain maps to 6 to 71 (CYYEVLKVER…NKRARYDQYG (66 aa)). The CR-type zinc finger occupies 137–215 (GCHKDIVFRR…CRGTGTQNEK (79 aa)). Positions 150, 153, 167, 170, 189, 192, 203, and 206 each coordinate Zn(2+). CXXCXGXG motif repeat units follow at residues 150 to 157 (CDTCDGSG), 167 to 174 (CTMCGGQG), 189 to 196 (CPTCKGAG), and 203 to 210 (CGKCRGTG). The disordered stretch occupies residues 372–391 (FFDPEPEEAGTGSTDTEKDS).

Belongs to the DnaJ family. In terms of assembly, homodimer. It depends on Zn(2+) as a cofactor.

Its subcellular location is the cytoplasm. Functionally, participates actively in the response to hyperosmotic and heat shock by preventing the aggregation of stress-denatured proteins and by disaggregating proteins, also in an autonomous, DnaK-independent fashion. Unfolded proteins bind initially to DnaJ; upon interaction with the DnaJ-bound protein, DnaK hydrolyzes its bound ATP, resulting in the formation of a stable complex. GrpE releases ADP from DnaK; ATP binding to DnaK triggers the release of the substrate protein, thus completing the reaction cycle. Several rounds of ATP-dependent interactions between DnaJ, DnaK and GrpE are required for fully efficient folding. Also involved, together with DnaK and GrpE, in the DNA replication of plasmids through activation of initiation proteins. This is Chaperone protein DnaJ from Rhodopirellula baltica (strain DSM 10527 / NCIMB 13988 / SH1).